The following is a 387-amino-acid chain: S-adenosylmethionine synthase (387 aa).

E8 contacts Mg(2+). Residue H14 coordinates ATP. Position 42 (E42) interacts with K(+). L-methionine contacts are provided by E55 and Q98. ATP-binding positions include 166–168 (DGK), 234–237 (SGRF), D245, 251–252 (RK), A268, K272, and K276. An L-methionine-binding site is contributed by D245. K276 is a binding site for L-methionine.

It belongs to the AdoMet synthase family. Homotetramer. The cofactor is Mn(2+). It depends on Mg(2+) as a cofactor. Co(2+) serves as cofactor. Requires K(+) as cofactor.

It is found in the cytoplasm. The catalysed reaction is L-methionine + ATP + H2O = S-adenosyl-L-methionine + phosphate + diphosphate. Its pathway is amino-acid biosynthesis; S-adenosyl-L-methionine biosynthesis; S-adenosyl-L-methionine from L-methionine: step 1/1. Functionally, catalyzes the formation of S-adenosylmethionine from methionine and ATP. The reaction comprises two steps that are both catalyzed by the same enzyme: formation of S-adenosylmethionine (AdoMet) and triphosphate, and subsequent hydrolysis of the triphosphate. In Ostreococcus lucimarinus (strain CCE9901), this protein is S-adenosylmethionine synthase (METK-1).